We begin with the raw amino-acid sequence, 298 residues long: UDP-N-acetylenolpyruvoylglucosamine reductase (298 aa).

The 166-residue stretch at 26 to 191 folds into the FAD-binding PCMH-type domain; sequence KTGGEAEYLA…LSATFSLTPG (166 aa). Residue arginine 170 is part of the active site. Serine 220 acts as the Proton donor in catalysis. The active site involves glutamate 290.

It belongs to the MurB family. It depends on FAD as a cofactor.

It is found in the cytoplasm. It carries out the reaction UDP-N-acetyl-alpha-D-muramate + NADP(+) = UDP-N-acetyl-3-O-(1-carboxyvinyl)-alpha-D-glucosamine + NADPH + H(+). It participates in cell wall biogenesis; peptidoglycan biosynthesis. In terms of biological role, cell wall formation. This is UDP-N-acetylenolpyruvoylglucosamine reductase from Lactobacillus helveticus (strain DPC 4571).